Consider the following 295-residue polypeptide: Bifunctional protein FolD (295 aa).

Residues 175-177 (GVS) and Ile-243 contribute to the NADP(+) site.

Belongs to the tetrahydrofolate dehydrogenase/cyclohydrolase family. Homodimer.

It catalyses the reaction (6R)-5,10-methylene-5,6,7,8-tetrahydrofolate + NADP(+) = (6R)-5,10-methenyltetrahydrofolate + NADPH. It carries out the reaction (6R)-5,10-methenyltetrahydrofolate + H2O = (6R)-10-formyltetrahydrofolate + H(+). The protein operates within one-carbon metabolism; tetrahydrofolate interconversion. In terms of biological role, catalyzes the oxidation of 5,10-methylenetetrahydrofolate to 5,10-methenyltetrahydrofolate and then the hydrolysis of 5,10-methenyltetrahydrofolate to 10-formyltetrahydrofolate. In Xylella fastidiosa (strain 9a5c), this protein is Bifunctional protein FolD.